The sequence spans 637 residues: Probable serine/threonine-protein kinase DDB_G0283065 (637 aa).

2 disordered regions span residues 36-88 (NNNN…KFNR) and 155-234 (NSNN…RFNN). A compositionally biased stretch (low complexity) spans 53–85 (NNSTTKSIDNNNNNTNNSNSNNNNNDNIKNNNK). One can recognise a Protein kinase domain in the interval 236–629 (FNDVRVLGKG…NQISTDYDNF (394 aa)). ATP-binding positions include 242–250 (LGKGGFGIV) and K265. The Proton acceptor role is filled by D479.

It belongs to the protein kinase superfamily. Ser/Thr protein kinase family. GCN2 subfamily.

It carries out the reaction L-seryl-[protein] + ATP = O-phospho-L-seryl-[protein] + ADP + H(+). The enzyme catalyses L-threonyl-[protein] + ATP = O-phospho-L-threonyl-[protein] + ADP + H(+). The sequence is that of Probable serine/threonine-protein kinase DDB_G0283065 from Dictyostelium discoideum (Social amoeba).